The following is a 557-amino-acid chain: MRFSLLALVLLSSSYKFTYGSECGDSTIPYSLEVLSSGQPILGCARPTCFGWHSNGHQLPTNAKFFRIDQQSDGFLRDDPLAIHTFDAADPRVYAQQQASCEQEFQSLSCNPEDQWVGGIAPVMNASTTKIVAYKCCTYAPLRASIDRGVATVSGGQIVVGGEIFADNKPYAFDYISNVEKKIDSEGEIFYEVNIKRFSCLDLQKVDRSVPEILNSENTIRHVNGHRFVVHQAPTVDVETPVETGQLVVPQGVQNGQEVIIEEIVAQEGFVQETNPQPPPPPGQQGGFVQPQGFQPQGGFQPQGFQPQGFQPQAFQPQVVQNPVPAAPAGYAPMGFAPSGLQLYYCFPGDAMVNVYNGGFKRMDELAVGDWVQALDKNGSQVTFIPVQYWLHRDPKQVADFVEFTLDNGETFSLTEKHLVFVTQCSVPYSEDENINANPVPAERVNIGDCFYIAHRKKSQMYQRVKVLDINIVQKTGIYSPMTSRGHLLVDRIHASCHSETDNYSLQNTFFTNVLRWKSQIRNYFWTVEDSTNEDNIGYGLNGVMAVLDIVIPSKLM.

Residues 1–20 (MRFSLLALVLLSSSYKFTYG) form the signal peptide. Residues 272–308 (QETNPQPPPPPGQQGGFVQPQGFQPQGGFQPQGFQPQ) form a disordered region. A compositionally biased stretch (low complexity) spans 287-308 (GFVQPQGFQPQGGFQPQGFQPQ).

This sequence belongs to the hedgehog family. The C-terminal domain displays an autoproteolysis activity.

It localises to the secreted. The protein resides in the cell surface. The protein localises to the cell membrane. Its subcellular location is the extracellular space. Intercellular signal essential for a variety of patterning events during development. The chain is Warthog protein 4 (wrt-4) from Caenorhabditis elegans.